A 250-amino-acid chain; its full sequence is Geranylgeranylglyceryl phosphate synthase (250 aa).

Mg(2+)-binding residues include D26 and S55. Sn-glycerol 1-phosphate is bound by residues Y174–G180, G205–G206, and G227–T228.

It belongs to the GGGP/HepGP synthase family. Group II subfamily. The cofactor is Mg(2+).

Its subcellular location is the cytoplasm. It catalyses the reaction sn-glycerol 1-phosphate + (2E,6E,10E)-geranylgeranyl diphosphate = sn-3-O-(geranylgeranyl)glycerol 1-phosphate + diphosphate. The protein operates within membrane lipid metabolism; glycerophospholipid metabolism. In terms of biological role, prenyltransferase that catalyzes the transfer of the geranylgeranyl moiety of geranylgeranyl diphosphate (GGPP) to the C3 hydroxyl of sn-glycerol-1-phosphate (G1P). This reaction is the first ether-bond-formation step in the biosynthesis of archaeal membrane lipids. This is Geranylgeranylglyceryl phosphate synthase from Nitrosopumilus maritimus (strain SCM1).